The sequence spans 82 residues: uncharacterized protein (82 aa).

The protein localises to the plastid. The protein resides in the chloroplast. This is an uncharacterized protein from Vicia faba (Broad bean).